The chain runs to 80 residues: DNA-directed RNA polymerase RPB10 homolog (80 aa).

Cys-7, Cys-10, Cys-65, and Cys-66 together coordinate Zn(2+).

It belongs to the archaeal RpoN/eukaryotic RPB10 RNA polymerase subunit family. In terms of assembly, part of the viral DNA-directed RNA polymerase that consists of 8 polII-like subunits (RPB1, RPB2, RPB3, RPB5, RPB6, RPB7, RPB9, RPB10), a capping enzyme and a termination factor.

Its subcellular location is the host cytoplasm. Component of the DNA-directed RNA polymerase (RNAP) that catalyzes the transcription in the cytoplasm of viral DNA into RNA using the four ribonucleoside triphosphates as substrates. The protein is DNA-directed RNA polymerase RPB10 homolog of African swine fever virus (strain Badajoz 1971 Vero-adapted) (Ba71V).